We begin with the raw amino-acid sequence, 205 residues long: Lymphotoxin-alpha (205 aa).

Positions M1–G34 are cleaved as a signal peptide. O-linked (GalNAc...) threonine; partial glycosylation is present at T41. One can recognise a THD domain in the interval P63–L205. A glycan (N-linked (GlcNAc...) asparagine) is linked at N96.

Belongs to the tumor necrosis factor family. Homotrimer, and heterotrimer of either two LTB and one LTA subunits or (less prevalent) two LTA and one LTB subunits. Interacts with TNFRSF14.

Its subcellular location is the secreted. It is found in the membrane. Functionally, cytokine that in its homotrimeric form binds to TNFRSF1A/TNFR1, TNFRSF1B/TNFBR and TNFRSF14/HVEM. In its heterotrimeric form with LTB binds to TNFRSF3/LTBR. Lymphotoxin is produced by lymphocytes and is cytotoxic for a wide range of tumor cells in vitro and in vivo. This is Lymphotoxin-alpha (LTA) from Homo sapiens (Human).